A 353-amino-acid chain; its full sequence is Quinolinate synthase (353 aa).

Iminosuccinate-binding residues include H47 and S68. [4Fe-4S] cluster is bound at residue C113. Iminosuccinate contacts are provided by residues 139–141 and S156; that span reads YAN. C200 contacts [4Fe-4S] cluster. Iminosuccinate is bound by residues 226 to 228 and T243; that span reads HPE. C297 contacts [4Fe-4S] cluster.

The protein belongs to the quinolinate synthase family. Type 1 subfamily. The cofactor is [4Fe-4S] cluster.

The protein localises to the cytoplasm. The enzyme catalyses iminosuccinate + dihydroxyacetone phosphate = quinolinate + phosphate + 2 H2O + H(+). It participates in cofactor biosynthesis; NAD(+) biosynthesis; quinolinate from iminoaspartate: step 1/1. In terms of biological role, catalyzes the condensation of iminoaspartate with dihydroxyacetone phosphate to form quinolinate. The chain is Quinolinate synthase from Vibrio vulnificus (strain CMCP6).